We begin with the raw amino-acid sequence, 141 residues long: Nucleoside diphosphate kinase (141 aa).

Positions 11, 59, 87, 93, 104, and 114 each coordinate ATP.

This sequence belongs to the NDK family. In terms of assembly, homotetramer. Mg(2+) is required as a cofactor.

The protein localises to the cytoplasm. It carries out the reaction a 2'-deoxyribonucleoside 5'-diphosphate + ATP = a 2'-deoxyribonucleoside 5'-triphosphate + ADP. It catalyses the reaction a ribonucleoside 5'-diphosphate + ATP = a ribonucleoside 5'-triphosphate + ADP. Major role in the synthesis of nucleoside triphosphates other than ATP. The ATP gamma phosphate is transferred to the NDP beta phosphate via a ping-pong mechanism, using a phosphorylated active-site intermediate. The polypeptide is Nucleoside diphosphate kinase (Saccharophagus degradans (strain 2-40 / ATCC 43961 / DSM 17024)).